A 69-amino-acid chain; its full sequence is UPF0291 protein CD630_10710 (69 aa).

This sequence belongs to the UPF0291 family.

It localises to the cytoplasm. The protein is UPF0291 protein CD630_10710 of Clostridioides difficile (strain 630) (Peptoclostridium difficile).